The sequence spans 392 residues: MMPVSGWRAVSSAPASSSAGRTANRIDFARSPRPTVGVEWEFALVDAETRDLSNEATAVIAEIGENPRVHKELLRNTVEVVSGVCGSAGEAIEDLRTTLGPARRIVHARGMELFCEGTHPFAQWSTQKLTDAPRYAELIKRTQWWGRQMLIWGVHVHVGVSSANKVMPIISALLNYYPHLLALSASSPWWGGEDTGYASNRAMMFQQLPTAGLPFQFQTWSEFEGFVYDQKKTGIIDHINEIRWDIRPSPHLGTIELRICDGVSNLRELGALVALMHCLVVDLDRRLDAGETLPTMPPWHVQENKWRAARYGLDAVIILDAESNERLVTDDLDDVLTRLEPVARSLSCADELAAVAEIPRVGASYQRQRRVAEEHDGDLRAVVDALIAELDI.

The interval 1 to 21 is disordered; it reads MMPVSGWRAVSSAPASSSAGR. Residues 9–19 are compositionally biased toward low complexity; sequence AVSSAPASSSA.

This sequence belongs to the glutamate--cysteine ligase type 2 family. YbdK subfamily.

The catalysed reaction is L-cysteine + L-glutamate + ATP = gamma-L-glutamyl-L-cysteine + ADP + phosphate + H(+). In terms of biological role, ATP-dependent carboxylate-amine ligase which exhibits weak glutamate--cysteine ligase activity. The polypeptide is Putative glutamate--cysteine ligase 2 (Mycobacterium ulcerans (strain Agy99)).